Here is a 114-residue protein sequence, read N- to C-terminus: Large ribosomal subunit protein uL24 (114 aa).

Belongs to the universal ribosomal protein uL24 family. In terms of assembly, part of the 50S ribosomal subunit.

One of two assembly initiator proteins, it binds directly to the 5'-end of the 23S rRNA, where it nucleates assembly of the 50S subunit. Its function is as follows. One of the proteins that surrounds the polypeptide exit tunnel on the outside of the subunit. The chain is Large ribosomal subunit protein uL24 from Acidothermus cellulolyticus (strain ATCC 43068 / DSM 8971 / 11B).